Reading from the N-terminus, the 495-residue chain is Probable plastidic glucose transporter 3 (495 aa).

12 helical membrane-spanning segments follow: residues 55–75 (LPHV…LGVV), 97–117 (LVVS…GLVA), 131–151 (LPMI…GMLL), 154–174 (FLVG…VTEV), 183–203 (YGSS…FAGI), 214–234 (ICFW…ELCV), 294–314 (VVFI…NAVF), 330–350 (SANI…VVLM), 357–377 (VLLI…AIAY), 384–404 (FGTL…FATG), 425–445 (ALAV…LLFL), and 451–471 (LGSV…VIFV).

Belongs to the major facilitator superfamily. Sugar transporter (TC 2.A.1.1) family.

The protein localises to the plastid. Its subcellular location is the chloroplast membrane. Functionally, may be involved in the efflux of glucose towards the cytosol. The protein is Probable plastidic glucose transporter 3 of Arabidopsis thaliana (Mouse-ear cress).